The following is a 347-amino-acid chain: NADH-ubiquinone oxidoreductase chain 2 (347 aa).

The next 11 helical transmembrane spans lie at 3-23 (PLIFPIIMLTIMLGTLIVMIS), 25-45 (HWLMIWMGFEMNMLAVIPVLM), 59-79 (YFLTQATASMLLMLAIVINLL), 96-116 (IIMTLALTMKLGLAPFHFWVP), 122-142 (VSLTSGLVLLTWQKLAPLSVL), 145-165 (IAPVINSDLILTMSILSIMIG), 178-198 (ILAYSSIAHMGWMTSVLIFNP), 202-222 (LLNLLLYILMTSTTFALFMTV), 240-260 (ITTSILIMMLSLGGLPPLTGF), 276-296 (IILATLMAIAALLSLFFYMRL), and 326-346 (LSPLIILSTLTLPLAPAMMIL).

Belongs to the complex I subunit 2 family. Core subunit of respiratory chain NADH dehydrogenase (Complex I) which is composed of 45 different subunits. Interacts with TMEM242.

It is found in the mitochondrion inner membrane. It catalyses the reaction a ubiquinone + NADH + 5 H(+)(in) = a ubiquinol + NAD(+) + 4 H(+)(out). Its function is as follows. Core subunit of the mitochondrial membrane respiratory chain NADH dehydrogenase (Complex I) which catalyzes electron transfer from NADH through the respiratory chain, using ubiquinone as an electron acceptor. Essential for the catalytic activity and assembly of complex I. The protein is NADH-ubiquinone oxidoreductase chain 2 of Peropteryx macrotis (Lesser dog-like bat).